Consider the following 344-residue polypeptide: MIEIRNISQRFAGPRGSVEALHNVNLSIPAGEVFGIIGRSGAGKSTLVRTINLLTRPSEGNIVVNGRDLTTLPAAQLREARREIGMIFQHFNLLSSRTVYGNVALPLELAGMKRDEIEANVLPLLELVGLTAQKDRYPAQISGGQKQRVGIARALASKPKVLLSDEATSALDPETTRSILDLLRRINRELNLTIVLITHQMDVIKQVCDRVAVLDAGRVVEEGKVIDVFLQPHHEVTRALIGDVIAQELPPAMKARVAERLKTGSGHLLRLAFTGSGVDQPILSETIRRYELDFNILHGQIDEIQGQAFGSLAVLAGGEPAKVAQALTYLREQGVVVEELSYVE.

In terms of domain architecture, ABC transporter spans 2–241 (IEIRNISQRF…PHHEVTRALI (240 aa)). 38 to 45 (GRSGAGKS) lines the ATP pocket.

Belongs to the ABC transporter superfamily. Methionine importer (TC 3.A.1.24) family. In terms of assembly, the complex is composed of two ATP-binding proteins (MetN), two transmembrane proteins (MetI) and a solute-binding protein (MetQ).

It is found in the cell inner membrane. The catalysed reaction is L-methionine(out) + ATP + H2O = L-methionine(in) + ADP + phosphate + H(+). It catalyses the reaction D-methionine(out) + ATP + H2O = D-methionine(in) + ADP + phosphate + H(+). Part of the ABC transporter complex MetNIQ involved in methionine import. Responsible for energy coupling to the transport system. In Paraburkholderia xenovorans (strain LB400), this protein is Methionine import ATP-binding protein MetN 1.